The sequence spans 275 residues: tRNA (guanine-N(7)-)-methyltransferase (275 aa).

Residues 1–73 (MRHHGRMHAR…GGQQDTWERL (73 aa)) are disordered. The span at 46 to 59 (AHRHRRVTSFRSRR) shows a compositional bias: basic residues. S-adenosyl-L-methionine contacts are provided by Glu107, Glu132, Asp159, and Asp182. Asp182 is a catalytic residue. Substrate is bound by residues Lys186, Asp218, and 254 to 257 (TKYE).

This sequence belongs to the class I-like SAM-binding methyltransferase superfamily. TrmB family.

It carries out the reaction guanosine(46) in tRNA + S-adenosyl-L-methionine = N(7)-methylguanosine(46) in tRNA + S-adenosyl-L-homocysteine. The protein operates within tRNA modification; N(7)-methylguanine-tRNA biosynthesis. In terms of biological role, catalyzes the formation of N(7)-methylguanine at position 46 (m7G46) in tRNA. The protein is tRNA (guanine-N(7)-)-methyltransferase of Mycobacterium sp. (strain KMS).